The sequence spans 277 residues: Alternative cytochrome c oxidase subunit 2 (277 aa).

Residues 1-40 (MAVALILLLIAIGSVLFHLFSPWWWTPIATNWGYIDDTIN) are Periplasmic-facing. The helical transmembrane segment at 41–61 (ITFWITGFVFTAVILFMAYCV) threads the bilayer. Topologically, residues 62–83 (FRFHHKEGRQAAYNPENKKLEW) are cytoplasmic. The helical transmembrane segment at 84–104 (WLSVGTGVGVAAMLAPGLVVW) threads the bilayer. Residues 105–277 (HQFVTVPADA…VRAKYNSGDD (173 aa)) lie on the Periplasmic side of the membrane. Positions 190, 225, 229, and 233 each coordinate Cu cation.

It belongs to the cytochrome c oxidase subunit 2 family.

The protein localises to the cell membrane. The enzyme catalyses 4 Fe(II)-[cytochrome c] + O2 + 8 H(+)(in) = 4 Fe(III)-[cytochrome c] + 2 H2O + 4 H(+)(out). Its function is as follows. Cytochrome c oxidase is the component of the respiratory chain that catalyzes the reduction of oxygen to water. Subunits 1-3 form the functional core of the enzyme complex. Subunit 2 transfers the electrons from cytochrome c via its binuclear copper A center to the bimetallic center of the catalytic subunit 1. The sequence is that of Alternative cytochrome c oxidase subunit 2 (coxM) from Bradyrhizobium diazoefficiens (strain JCM 10833 / BCRC 13528 / IAM 13628 / NBRC 14792 / USDA 110).